The sequence spans 317 residues: Hydroxyacyl-CoA dehydrogenase ChsB1 (317 aa).

Residues Leu-32, Asp-51, Asp-82, Ile-83, Asn-108, Ser-168, Tyr-181, Lys-185, and Thr-215 each contribute to the NAD(+) site. Active-site residues include Ser-168, Tyr-181, and Lys-185.

It belongs to the short-chain dehydrogenases/reductases (SDR) family. In terms of assembly, homodimer, with 1 active site on each face.

It catalyses the reaction (22S)-hydroxy-3-oxo-chol-4-ene-24-oyl-CoA + NAD(+) = 3,22-dioxochol-4-en-24-oyl-CoA + NADH + H(+). Its pathway is steroid metabolism; cholesterol degradation. Functionally, a reversible dehydrogenase involved in cholesterol side-chain degradation. Catalyzes the oxidation of hydroxyl-cholesterol-CoA ester metabolic intermediate (22S)-HOCO-CoA (3-oxo-chol-4-ene-(22S)-hydroxy-24-oyl-CoA), the product of ChsH3, has no activity on (22R)-HOCO-CoA (the product of EchA19). Also acts on (3R)-hydroxyoctanoyl-CoA and 17-beta-hydroxyandrost-4-en-3-one, but not on 7-alpha-hydroxyandrost-4-en-3-one, uses NAD(+) but not NADP(+). The protein is Hydroxyacyl-CoA dehydrogenase ChsB1 of Mycobacterium tuberculosis (strain ATCC 25618 / H37Rv).